The following is a 190-amino-acid chain: RNA pyrophosphohydrolase (190 aa).

The Nudix hydrolase domain maps to 6–149 (GYRPNVGIIL…KRDVYTQALN (144 aa)). A Nudix box motif is present at residues 38-59 (GGIKYGESPVQAMYRELHEEVG). A disordered region spans residues 167-190 (QRVHGPRSTDNPSSETDGHAHIAG).

The protein belongs to the Nudix hydrolase family. RppH subfamily. A divalent metal cation is required as a cofactor.

In terms of biological role, accelerates the degradation of transcripts by removing pyrophosphate from the 5'-end of triphosphorylated RNA, leading to a more labile monophosphorylated state that can stimulate subsequent ribonuclease cleavage. This chain is RNA pyrophosphohydrolase, found in Bordetella parapertussis (strain 12822 / ATCC BAA-587 / NCTC 13253).